We begin with the raw amino-acid sequence, 199 residues long: Phosphatidylethanolamine N-methyltransferase (199 aa).

Residues 1–12 (MTRLLGYVDPLD) are Lumenal-facing. An intramembrane region (helical) is located at residues 13–33 (PSFVAAVITITFNPLYWNVVA). At 34-45 (RWEHKTRKLSRA) the chain is on the lumenal side. The chain crosses the membrane as a helical span at residues 46 to 66 (FGSPYLACYSLSVTILLLNFL). Topologically, residues 67 to 93 (RSHCFTQAMLSQPRMESLDTPAAYSLG) are cytoplasmic. Residues 94-114 (LALLGLGVVLVLSSFFALGFA) traverse the membrane as a helical segment. 98–100 (GLG) serves as a coordination point for S-adenosyl-L-methionine. At 115-157 (GTFLGDYFGILKEARVTVFPFNILDNPMYWGSTANYLGWAIMH) the chain is on the lumenal side. The chain crosses the membrane as a helical span at residues 158–178 (ASPTGLLLTVLVALTYIVALL). Residues 179-199 (YEEPFTAEIYRQKASGSHKRS) are Cytoplasmic-facing. 180–181 (EE) contacts S-adenosyl-L-methionine.

It belongs to the class VI-like SAM-binding methyltransferase superfamily. PEMT/PEM2 methyltransferase family. In terms of processing, isoform 2 is N-glycosylated with high-mannose oligosaccharides. Primarily expressed in liver (at protein level).

It localises to the endoplasmic reticulum. Its subcellular location is the endoplasmic reticulum membrane. The protein localises to the mitochondrion membrane. It carries out the reaction a 1,2-diacyl-sn-glycero-3-phospho-N-methylethanolamine + S-adenosyl-L-methionine = a 1,2-diacyl-sn-glycero-3-phospho-N,N-dimethylethanolamine + S-adenosyl-L-homocysteine + H(+). It catalyses the reaction a 1,2-diacyl-sn-glycero-3-phospho-N,N-dimethylethanolamine + S-adenosyl-L-methionine = a 1,2-diacyl-sn-glycero-3-phosphocholine + S-adenosyl-L-homocysteine + H(+). The enzyme catalyses a 1,2-diacyl-sn-glycero-3-phosphoethanolamine + S-adenosyl-L-methionine = a 1,2-diacyl-sn-glycero-3-phospho-N-methylethanolamine + S-adenosyl-L-homocysteine + H(+). The catalysed reaction is 1,2-di-(9Z-octadecenoyl)-sn-glycero-3-phosphoethanolamine + S-adenosyl-L-methionine = 1,2-di-(9Z-octadecenoyl)-sn-glycero-3-phospho-N-methylethanolamine + S-adenosyl-L-homocysteine + H(+). It carries out the reaction 1,2-di-(9Z-octadecenoyl)-sn-glycero-3-phospho-N-methylethanolamine + S-adenosyl-L-methionine = 1,2-di-(9Z-octadecenoyl)-sn-glycero-3-phospho-N,N-dimethylethanolamine + S-adenosyl-L-homocysteine + H(+). It catalyses the reaction 1,2-di-(9Z-octadecenoyl)-sn-glycero-3-phospho-N,N-dimethylethanolamine + S-adenosyl-L-methionine = 1,2-di-(9Z-octadecenoyl)-sn-glycero-3-phosphocholine + S-adenosyl-L-homocysteine + H(+). The enzyme catalyses 1,2-di-(9Z,12Z-octadecadienoyl)-sn-glycero-3-phosphoethanolamine + S-adenosyl-L-methionine = 1,2-di-(9Z,12Z-octadecadienoyl)-sn-glycero-3-phospho-N-methylethanolamine + S-adenosyl-L-homocysteine + H(+). The catalysed reaction is 1,2-di-(9Z,12Z-octadecadienoyl)-sn-glycero-3-phospho-N-methylethanolamine + S-adenosyl-L-methionine = 1,2-di-(9Z,12Z-octadecadienoyl)-sn-glycero-3-phospho-N,N-dimethylethanolamine + S-adenosyl-L-homocysteine + H(+). It carries out the reaction 1,2-di-(9Z,12Z-octadecadienoyl)-sn-glycero-3-phospho-N,N-dimethylethanolamine + S-adenosyl-L-methionine = 1,2-di-(9Z,12Z-octadecadienoyl)-sn-glycero-3-phosphocholine + S-adenosyl-L-homocysteine + H(+). It catalyses the reaction 1,2-di-(9Z,12Z,15Z-octadecatrienoyl)-sn-glycero-3-phosphoethanolamine + S-adenosyl-L-methionine = 1,2-di-(9Z,12Z,15Z-octadecatrienoyl)-sn-glycero-3-phospho-N-methylethanolamine + S-adenosyl-L-homocysteine + H(+). The enzyme catalyses 1,2-di-(9Z,12Z,15Z-octadecatrienoyl)-sn-glycero-3-phospho-N-methylethanolamine + S-adenosyl-L-methionine = 1,2-di-(9Z,12Z,15Z-octadecatrienoyl)-sn-glycero-3-phospho-N,N-dimethylethanolamine + S-adenosyl-L-homocysteine + H(+). The catalysed reaction is 1,2-di-(9Z,12Z,15Z-octadecatrienoyl)-sn-glycero-3-phospho-N,N-dimethylethanolamine + S-adenosyl-L-methionine = 1,2-di-(9Z,12Z,15Z-octadecatrienoyl)-sn-glycero-3-phosphocholine + S-adenosyl-L-homocysteine + H(+). It carries out the reaction 1-hexadecanoyl-2-(4Z,7Z,10Z,13Z,16Z,19Z-docosahexaenoyl)-sn-glycero-3-phosphoethanolamine + S-adenosyl-L-methionine = 1-hexadecanoyl-2-(4Z,7Z,10Z,13Z,16Z,19Z-docosahexaenoyl)-sn-glycero-3-phospho-N-methylethanolamine + S-adenosyl-L-homocysteine + H(+). It catalyses the reaction 1-hexadecanoyl-2-(4Z,7Z,10Z,13Z,16Z,19Z-docosahexaenoyl)-sn-glycero-3-phospho-N-methylethanolamine + S-adenosyl-L-methionine = 1-hexadecanoyl-2-(4Z,7Z,10Z,13Z,16Z,19Z-docosahexaenoyl)-sn-glycero-3-phospho-N,N-dimethylethanolamine + S-adenosyl-L-homocysteine + H(+). The enzyme catalyses 1-hexadecanoyl-2-(4Z,7Z,10Z,13Z,16Z,19Z-docosahexaenoyl)-sn-glycero-3-phospho-N,N-dimethylethanolamine + S-adenosyl-L-methionine = 1-hexadecanoyl-2-(4Z,7Z,10Z,13Z,16Z,19Z-docosahexaenoyl)-sn-glycero-3-phosphocholine + S-adenosyl-L-homocysteine + H(+). It participates in phospholipid metabolism; phosphatidylcholine biosynthesis. With respect to regulation, the first methylation is rate-limiting. Catalyzes the three sequential steps of the methylation pathway for the biosynthesis of phosphatidylcholine, a critical and essential component for membrane structure. Uses S-adenosylmethionine (S-adenosyl-L-methionine, SAM or AdoMet) as the methyl group donor for the methylation of phosphatidylethanolamine (1,2-diacyl-sn-glycero-3-phosphoethanolamine, PE) to phosphatidylmonomethylethanolamine (1,2-diacyl-sn-glycero-3-phospho-N-methylethanolamine, PMME), PMME to phosphatidyldimethylethanolamine (1,2-diacyl-sn-glycero-3-phospho-N,N-dimethylethanolamine, PDME), and PDME to phosphatidylcholine (1,2-diacyl-sn-glycero-3-phosphocholine, PC), producing S-adenosyl-L-homocysteine in each step. Responsible for approximately 30% of hepatic PC with the CDP-choline pathway accounting for the other 70%. In terms of biological role, catalyzes the three sequential steps of the methylation of 1,2-diacyl-sn-glycero-3-phospho-N-methylethanolamine (PMME) to 1,2-diacyl-sn-glycero-3-phospho-N,N-dimethylethanolamine (PDME) more efficiently than isoform 2. Induces increase in PC species with longer polyunsaturated chains than isoform 2. Its function is as follows. Produces a higher increase in the level of PC species containing long chains with three double bonds than isoform 1. The protein is Phosphatidylethanolamine N-methyltransferase of Homo sapiens (Human).